The sequence spans 58 residues: MTQVVVGQNENIESALRRFKRQVSKAGIFADIKRRRHFETPIEKRKRKAVARRKKRFR.

It belongs to the bacterial ribosomal protein bS21 family.

This Picosynechococcus sp. (strain ATCC 27264 / PCC 7002 / PR-6) (Agmenellum quadruplicatum) protein is Small ribosomal subunit protein bS21.